Reading from the N-terminus, the 446-residue chain is Signal recognition particle 54 kDa protein (446 aa).

GTP-binding positions include 103 to 110 (GVQGTGKT), 185 to 189 (DTAGR), and 245 to 248 (TKMD).

It belongs to the GTP-binding SRP family. SRP54 subfamily. Part of the signal recognition particle protein translocation system, which is composed of SRP and FtsY. Archaeal SRP consists of a 7S RNA molecule of 300 nucleotides and two protein subunits: SRP54 and SRP19.

Its subcellular location is the cytoplasm. The enzyme catalyses GTP + H2O = GDP + phosphate + H(+). Involved in targeting and insertion of nascent membrane proteins into the cytoplasmic membrane. Binds to the hydrophobic signal sequence of the ribosome-nascent chain (RNC) as it emerges from the ribosomes. The SRP-RNC complex is then targeted to the cytoplasmic membrane where it interacts with the SRP receptor FtsY. The chain is Signal recognition particle 54 kDa protein from Metallosphaera sedula (strain ATCC 51363 / DSM 5348 / JCM 9185 / NBRC 15509 / TH2).